The chain runs to 354 residues: Aspartate carbamoyltransferase catalytic subunit (354 aa).

2 residues coordinate carbamoyl phosphate: arginine 67 and threonine 68. Lysine 95 serves as a coordination point for L-aspartate. Residues arginine 117, histidine 150, and glutamine 153 each coordinate carbamoyl phosphate. L-aspartate-binding residues include arginine 190 and arginine 261. Residues glycine 302 and proline 303 each coordinate carbamoyl phosphate.

Belongs to the aspartate/ornithine carbamoyltransferase superfamily. ATCase family. As to quaternary structure, heterododecamer (2C3:3R2) of six catalytic PyrB chains organized as two trimers (C3), and six regulatory PyrI chains organized as three dimers (R2).

The catalysed reaction is carbamoyl phosphate + L-aspartate = N-carbamoyl-L-aspartate + phosphate + H(+). It participates in pyrimidine metabolism; UMP biosynthesis via de novo pathway; (S)-dihydroorotate from bicarbonate: step 2/3. Its function is as follows. Catalyzes the condensation of carbamoyl phosphate and aspartate to form carbamoyl aspartate and inorganic phosphate, the committed step in the de novo pyrimidine nucleotide biosynthesis pathway. This chain is Aspartate carbamoyltransferase catalytic subunit, found in Synechococcus sp. (strain RCC307).